Reading from the N-terminus, the 266-residue chain is Apolipoprotein A-I (266 aa).

The N-terminal stretch at 1–18 is a signal peptide; that stretch reads MKAVVLTLAVLFLTGSQA. Repeat copies occupy residues 67-88 and 89-110. The 10 X approximate tandem repeats stretch occupies residues 67–266; the sequence is LKLLDNWDSL…DEATKKLNAQ (200 aa). A Methionine sulfoxide modification is found at Met-109. A 3; half-length repeat occupies 111–121; sequence KDLEEVKKKVQ. A run of 5 repeats spans residues 122–143, 144–165, 166–187, 188–209, and 210–231. The 9; half-length repeat unit spans residues 232-242; sequence PALEDLRQGLM. The stretch at 243–266 is repeat 10; sequence PVLESFRASLLAAVDEATKKLNAQ.

The protein belongs to the apolipoprotein A1/A4/E family. Homodimer. Interacts with APOA1BP and CLU. Component of a sperm activating protein complex (SPAP), consisting of APOA1, an immunoglobulin heavy chain, an immunoglobulin light chain and albumin. Interacts with NDRG1. Interacts with SCGB3A2. Interacts with NAXE and YJEFN3. Glycosylated. In terms of processing, palmitoylated. Post-translationally, phosphorylation sites are present in the extracellular medium.

It localises to the secreted. Participates in the reverse transport of cholesterol from tissues to the liver for excretion by promoting cholesterol efflux from tissues and by acting as a cofactor for the lecithin cholesterol acyltransferase (LCAT). As part of the SPAP complex, activates spermatozoa motility. The polypeptide is Apolipoprotein A-I (APOA1) (Phoca vitulina (Harbor seal)).